The sequence spans 186 residues: Small ribosomal subunit protein eS7 (186 aa).

It belongs to the eukaryotic ribosomal protein eS7 family. In terms of assembly, component of the small ribosomal subunit. Mature ribosomes consist of a small (40S) and a large (60S) subunit. The 40S subunit contains about 32 different proteins and 1 molecule of RNA (18S). The 60S subunit contains 45 different proteins and 3 molecules of RNA (25S, 5.8S and 5S).

Its subcellular location is the cytoplasm. Component of the ribosome, a large ribonucleoprotein complex responsible for the synthesis of proteins in the cell. The small ribosomal subunit (SSU) binds messenger RNAs (mRNAs) and translates the encoded message by selecting cognate aminoacyl-transfer RNA (tRNA) molecules. The large subunit (LSU) contains the ribosomal catalytic site termed the peptidyl transferase center (PTC), which catalyzes the formation of peptide bonds, thereby polymerizing the amino acids delivered by tRNAs into a polypeptide chain. The nascent polypeptides leave the ribosome through a tunnel in the LSU and interact with protein factors that function in enzymatic processing, targeting, and the membrane insertion of nascent chains at the exit of the ribosomal tunnel. RPS7A is involved in nucleolar processing of pre-18S ribosomal RNA and ribosome assembly. The chain is Small ribosomal subunit protein eS7 (RPS7A) from Candida albicans (strain SC5314 / ATCC MYA-2876) (Yeast).